A 315-amino-acid polypeptide reads, in one-letter code: ATP synthase gamma chain (315 aa).

F-type ATPases have 2 components, CF(1) - the catalytic core - and CF(0) - the membrane proton channel. CF(1) has five subunits: alpha(3), beta(3), gamma(1), delta(1), epsilon(1). CF(0) has four main subunits: a(1), b(1), b'(1) and c(9-12).

It localises to the cellular thylakoid membrane. Its function is as follows. Produces ATP from ADP in the presence of a proton gradient across the membrane. The gamma chain is believed to be important in regulating ATPase activity and the flow of protons through the CF(0) complex. In terms of biological role, the complex from the organism is particularly stable to disruption and remains functional after 6 hrs at 55 degrees Celsius. This is ATP synthase gamma chain from Thermosynechococcus vestitus (strain NIES-2133 / IAM M-273 / BP-1).